A 556-amino-acid chain; its full sequence is 2-succinyl-5-enolpyruvyl-6-hydroxy-3-cyclohexene-1-carboxylate synthase (556 aa).

It belongs to the TPP enzyme family. MenD subfamily. In terms of assembly, homodimer. Requires Mg(2+) as cofactor. Mn(2+) serves as cofactor. The cofactor is thiamine diphosphate.

The enzyme catalyses isochorismate + 2-oxoglutarate + H(+) = 5-enolpyruvoyl-6-hydroxy-2-succinyl-cyclohex-3-ene-1-carboxylate + CO2. The protein operates within quinol/quinone metabolism; 1,4-dihydroxy-2-naphthoate biosynthesis; 1,4-dihydroxy-2-naphthoate from chorismate: step 2/7. It participates in quinol/quinone metabolism; menaquinone biosynthesis. Catalyzes the thiamine diphosphate-dependent decarboxylation of 2-oxoglutarate and the subsequent addition of the resulting succinic semialdehyde-thiamine pyrophosphate anion to isochorismate to yield 2-succinyl-5-enolpyruvyl-6-hydroxy-3-cyclohexene-1-carboxylate (SEPHCHC). This chain is 2-succinyl-5-enolpyruvyl-6-hydroxy-3-cyclohexene-1-carboxylate synthase, found in Escherichia coli O157:H7.